The chain runs to 244 residues: uncharacterized protein (244 aa).

The first 18 residues, 1–18, serve as a signal peptide directing secretion; sequence MQFSVLCKFLLLVTAVMA. At 19 to 223 the chain is on the lumenal side; the sequence is QTEYTPGFTT…TTIPSSAVHY (205 aa). Low complexity-rich tracts occupy residues 55 to 65 and 75 to 128; these read ETSTHSVTSTN and TSHN…TTHV. The interval 55–128 is disordered; that stretch reads ETSTHSVTST…TTVVPPTTHV (74 aa). A helical transmembrane segment spans residues 224–244; that stretch reads ASPSGLLALVVMLISAFAFLA.

The protein resides in the endoplasmic reticulum membrane. This is an uncharacterized protein from Schizosaccharomyces pombe (strain 972 / ATCC 24843) (Fission yeast).